We begin with the raw amino-acid sequence, 507 residues long: Probable DNA ligase (507 aa).

E209 provides a ligand contact to ATP. K211 functions as the N6-AMP-lysine intermediate in the catalytic mechanism. ATP-binding residues include R216, R231, E260, F295, R366, and K372.

It belongs to the ATP-dependent DNA ligase family. Mg(2+) is required as a cofactor.

The enzyme catalyses ATP + (deoxyribonucleotide)n-3'-hydroxyl + 5'-phospho-(deoxyribonucleotide)m = (deoxyribonucleotide)n+m + AMP + diphosphate.. In terms of biological role, DNA ligase that seals nicks in double-stranded DNA during DNA replication, DNA recombination and DNA repair. The sequence is that of Probable DNA ligase from Pseudarthrobacter chlorophenolicus (strain ATCC 700700 / DSM 12829 / CIP 107037 / JCM 12360 / KCTC 9906 / NCIMB 13794 / A6) (Arthrobacter chlorophenolicus).